A 173-amino-acid polypeptide reads, in one-letter code: Cytochrome c-type biogenesis protein CcmE (173 aa).

At 1–8 (MNPRRKSR) the chain is on the cytoplasmic side. The chain crosses the membrane as a helical; Signal-anchor for type II membrane protein span at residues 9-29 (FKLVIFVVLGIAIASGLMLYA). The Periplasmic segment spans residues 30–173 (LRQNIDLFYT…RDRQEKEGAK (144 aa)). Positions 131 and 135 each coordinate heme. Residues 152–173 (GIKAADLKGESARDRQEKEGAK) are disordered. Basic and acidic residues predominate over residues 156–173 (ADLKGESARDRQEKEGAK).

The protein belongs to the CcmE/CycJ family.

Its subcellular location is the cell inner membrane. Its function is as follows. Heme chaperone required for the biogenesis of c-type cytochromes. Transiently binds heme delivered by CcmC and transfers the heme to apo-cytochromes in a process facilitated by CcmF and CcmH. This is Cytochrome c-type biogenesis protein CcmE from Haemophilus influenzae (strain PittEE).